The chain runs to 510 residues: Secreted RxLR effector protein 24 (510 aa).

Residues 1–18 (MRGAFYVAIALLGSHTAA) form the signal peptide. Positions 47–68 (RVLRERRDSKDKLTVHAGAEER) match the RxLR-dEER motif.

The protein belongs to the RxLR effector family.

The protein resides in the secreted. Its subcellular location is the host nucleus. Functionally, secreted effector that acts as an elicitor that induces cell death in host plant cells. The chain is Secreted RxLR effector protein 24 from Plasmopara viticola (Downy mildew of grapevine).